Reading from the N-terminus, the 1174-residue chain is RecBCD enzyme subunit RecB (1174 aa).

The DNA-binding and helicase activity, interacts with RecC stretch occupies residues 1–852; that stretch reads MKIDSLKEKL…GGKTMNYEGL (852 aa). The UvrD-like helicase ATP-binding domain maps to 4–449; sequence DSLKEKLNIF…YYLDTNWRSS (446 aa). Position 25 to 32 (25 to 32) interacts with ATP; it reads ASAGTGKT. The UvrD-like helicase C-terminal domain occupies 479–745; that stretch reads PSSKNLKMNF…KIITIHKSKG (267 aa). The tract at residues 900 to 1174 is nuclease activity, interacts with RecD and RecA; that stretch reads TWSITSFSQL…LIKKTMTLIS (275 aa). Residues H957, D1068, and D1081 each contribute to the Mg(2+) site. The active-site For nuclease activity is D1081.

It belongs to the helicase family. UvrD subfamily. As to quaternary structure, heterotrimer of RecB, RecC and RecD. All subunits contribute to DNA-binding. Interacts with RecA. The cofactor is Mg(2+).

It carries out the reaction Exonucleolytic cleavage (in the presence of ATP) in either 5'- to 3'- or 3'- to 5'-direction to yield 5'-phosphooligonucleotides.. The enzyme catalyses Couples ATP hydrolysis with the unwinding of duplex DNA by translocating in the 3'-5' direction.. It catalyses the reaction ATP + H2O = ADP + phosphate + H(+). Its function is as follows. A helicase/nuclease that prepares dsDNA breaks (DSB) for recombinational DNA repair. Binds to DSBs and unwinds DNA via a highly rapid and processive ATP-dependent bidirectional helicase activity. Unwinds dsDNA until it encounters a Chi (crossover hotspot instigator) sequence from the 3' direction. Cuts ssDNA a few nucleotides 3' to the Chi site. The properties and activities of the enzyme are changed at Chi. The Chi-altered holoenzyme produces a long 3'-ssDNA overhang and facilitates RecA-binding to the ssDNA for homologous DNA recombination and repair. Holoenzyme degrades any linearized DNA that is unable to undergo homologous recombination. In the holoenzyme this subunit contributes ATPase, 3'-5' helicase, exonuclease activity and loads RecA onto ssDNA. This is RecBCD enzyme subunit RecB from Buchnera aphidicola subsp. Acyrthosiphon pisum (strain APS) (Acyrthosiphon pisum symbiotic bacterium).